A 137-amino-acid polypeptide reads, in one-letter code: uncharacterized protein (137 aa).

This is an uncharacterized protein from Acidianus convivator (ATV).